The sequence spans 961 residues: Retinoblastoma-like protein homolog lin-35 (961 aa).

Disordered stretches follow at residues 1-43 (MPKR…PPAK) and 55-129 (GGVQ…TPPP). The span at 68 to 81 (ELTQMTIKQETEGN) shows a compositional bias: polar residues. A compositionally biased stretch (acidic residues) spans 107–119 (GEDDDYEEDDADS). Residue Ser714 is modified to Phosphoserine; by CDK4. Thr719 carries the phosphothreonine; by CDK4 modification.

Belongs to the retinoblastoma protein (RB) family. Component of the DRM complex, at least composed of lin-9, lin-35, lin-37, lin-52, lin-53, lin-54, dpl-1 and efl-1. Interacts with lin-53. Interacts (via C-terminus) with dpl-1 (via C-terminus) and efl-1 (via C-terminus). Interacts (via C-terminus) with lin-8. In terms of processing, phosphorylated by the cyclin dependent kinase cdk-4. Phosphorylation inhibits the transcriptional repressor activity of lin-35 and allows for progression through the G1 phase of the cell cycle during postembryonic development.

It is found in the nucleus. Its function is as follows. Key regulator of cell division which acts as a transcriptional repressor and negatively regulates cell cycle progression in its active unphosphorylated form, but allows cell cycle progression when phosphorylated. When unphosphorylated and in its active form, interacts with E2F transcription factors such as efl-1 to repress their transcriptional activity and negatively regulate the progression through the G1 phase of the cell cycle during postembryonic development. May furthermore act with cell cycle regulator cki-1 to negatively regulate cell cycle progression. Acts redundantly with lin-53, fzr-1 and lin-23 to control cell cycle progression by regulating the expression of G1 phase cyclins. In particular, negatively regulates the expression of the cyclin E homolog cye-1, which is essential for the G1/S phase transition. Regulates cell division in the intestinal lineage, repressing the expression of genes such as cdc-25.2, which are required for intestinal cells to transition from the karyokinesis cell cycle (also known as nuclear division) to endoreplication, a specific growth pathway in the intestinal epithelium required for feeding and gut development in growing larvae during the L1 stage molt. Its role as a transcriptional repressor in the regulation of intestinal cell division during postembryonic development is most likely in complex with an E2F cell cycle regulatory transcription factor efl-1 and its binding partner the synthetic multivulva class B protein dpl-1. Synthetic multivulva (synMuv) class B protein. SynMuv proteins are required to repress the induction of vulval development by Ras signaling and probably act by forming the multiprotein DRM complex that represses transcription. Together with synMuv class B protein lin-53, and redundantly with synMuv class A protein lin-15A, represses transcription to control vulval development, most likely through antagonization of the Ras-signaling pathway in the major hypodermal syncytium hyp7. Acts redundantly with the transcriptional corepressor spr-1 and the zinc finger protein zfp-2 to play a role in vulval morphogenesis, promote germline proliferation and somatic gonad development. Acts redundantly with ubc-18 in the regulation of pharyngeal morphogenesis during embryonic development by negatively regulating the expression of proteins such as sup-35. Functions with the SWI/SNF complex and proteins such as pha-1 to regulate larval development. Functions redundantly with xnp-1 to regulate somatic gonad development. Acts redundantly with slr-2 to regulate the expression of intestinal genes required for nutrient utilization. Regulates transcription in response to starvation. Furthermore, in response to starvation, promotes germ cell programmed cell death by negatively regulating the expression of the anti-apoptotic protein ced-9. Conversely, in conjunction with mcd-1, efl-1 and the synthetic multivulva class B proteins dpl-1, lin-37 and lin-52, may also regulate transcription to promote programmed cell death independently of ced-1, ced-8 and ced-9 cell death pathways. Directly involved in heterochromatin formation by maintaining overall chromatin structure and, in particular, that of constitutive heterochromatin by stabilizing histone methylation. In particular, negatively regulates the expression of mes-4, a histone methyltransferase that controls the expression of germline specific genes. May play a role in double strand break formation during meiosis. May suppress sensitivity to RNAi. May play a role in the response to endoplasmic reticulum (ER) stress. The protein is Retinoblastoma-like protein homolog lin-35 of Caenorhabditis elegans.